The chain runs to 1361 residues: DNA-directed RNA polymerase subunit beta' (1361 aa).

C69, C71, C84, and C87 together coordinate Zn(2+). Mg(2+) contacts are provided by D460, D462, and D464. 4 residues coordinate Zn(2+): C808, C882, C889, and C892.

The protein belongs to the RNA polymerase beta' chain family. In terms of assembly, the RNAP catalytic core consists of 2 alpha, 1 beta, 1 beta' and 1 omega subunit. When a sigma factor is associated with the core the holoenzyme is formed, which can initiate transcription. Requires Mg(2+) as cofactor. Zn(2+) is required as a cofactor.

The enzyme catalyses RNA(n) + a ribonucleoside 5'-triphosphate = RNA(n+1) + diphosphate. Functionally, DNA-dependent RNA polymerase catalyzes the transcription of DNA into RNA using the four ribonucleoside triphosphates as substrates. The protein is DNA-directed RNA polymerase subunit beta' of Rickettsia bellii (strain RML369-C).